The chain runs to 539 residues: O-phosphoserine--tRNA(Cys) ligase (539 aa).

Substrate is bound by residues 188–190 (HMT), 233–235 (SAS), 275–276 (YY), and N327.

It belongs to the class-II aminoacyl-tRNA synthetase family. O-phosphoseryl-tRNA(Cys) synthetase subfamily. Homotetramer. Interacts with SepCysS.

The catalysed reaction is tRNA(Cys) + O-phospho-L-serine + ATP = O-phospho-L-seryl-tRNA(Cys) + AMP + diphosphate. Catalyzes the attachment of O-phosphoserine (Sep) to tRNA(Cys). This Methanosarcina mazei (strain ATCC BAA-159 / DSM 3647 / Goe1 / Go1 / JCM 11833 / OCM 88) (Methanosarcina frisia) protein is O-phosphoserine--tRNA(Cys) ligase.